A 197-amino-acid chain; its full sequence is Transcription factor FapR (197 aa).

The protein belongs to the FapR family.

In terms of biological role, transcriptional factor involved in regulation of membrane lipid biosynthesis by repressing genes involved in fatty acid and phospholipid metabolism. This is Transcription factor FapR from Bacillus cytotoxicus (strain DSM 22905 / CIP 110041 / 391-98 / NVH 391-98).